The primary structure comprises 377 residues: DNA-directed RNA polymerase subunit alpha (377 aa).

The alpha N-terminal domain (alpha-NTD) stretch occupies residues 1 to 259; it reads MSDSSHNLLY…KHFSVFEKMD (259 aa). The segment at 279 to 377 is alpha C-terminal domain (alpha-CTD); it reads ILHKLVLGIN…KIRSSKNTKG (99 aa).

It belongs to the RNA polymerase alpha chain family. Homodimer. The RNAP catalytic core consists of 2 alpha, 1 beta, 1 beta' and 1 omega subunit. When a sigma factor is associated with the core the holoenzyme is formed, which can initiate transcription.

It catalyses the reaction RNA(n) + a ribonucleoside 5'-triphosphate = RNA(n+1) + diphosphate. Its function is as follows. DNA-dependent RNA polymerase catalyzes the transcription of DNA into RNA using the four ribonucleoside triphosphates as substrates. The sequence is that of DNA-directed RNA polymerase subunit alpha from Chlamydia trachomatis serovar L2 (strain ATCC VR-902B / DSM 19102 / 434/Bu).